A 273-amino-acid chain; its full sequence is Nicotinamide N-methyltransferase (273 aa).

Residues Y35, Y40, 74 to 75 (GA), Y80, D96, N101, and 152 to 153 (NV) contribute to the S-adenosyl-L-methionine site.

It belongs to the class I-like SAM-binding methyltransferase superfamily. NNMT/PNMT/TEMT family.

It catalyses the reaction nicotinamide + S-adenosyl-L-methionine = 1-methylnicotinamide + S-adenosyl-L-homocysteine. In terms of biological role, catalyzes the N-methylation of nicotinamide and other pyridines to form pyridinium ions. Involved in regulation of lifespan extension downstream of the sirtuin sir-2.1, probably through its role in nicotinic acid metabolism. The polypeptide is Nicotinamide N-methyltransferase (Caenorhabditis elegans).